Reading from the N-terminus, the 68-residue chain is Peptide Hp1090 (68 aa).

The first 23 residues, 1–23, serve as a signal peptide directing secretion; sequence MKTQFAIFLITLVLFQMFSQSDA. Position 36 is a phenylalanine amide (F36). The propeptide occupies 40–68; it reads GLSDLDDLDESFDGEVSQADIDFLKELMQ.

The protein belongs to the non-disulfide-bridged peptide (NDBP) superfamily. Short antimicrobial peptide (group 4) family. In terms of tissue distribution, expressed by the venom gland.

The protein resides in the secreted. It localises to the target cell membrane. Its function is as follows. Amphipathic peptide which inhibits the growth of Gram-positive bacteria. This chain is Peptide Hp1090, found in Heterometrus petersii (Asian forest scorpion).